A 429-amino-acid chain; its full sequence is Probable M18 family aminopeptidase 2 (429 aa).

3 residues coordinate Zn(2+): H82, H156, and H401.

The protein belongs to the peptidase M18 family. Requires Zn(2+) as cofactor.

In Pseudomonas savastanoi pv. phaseolicola (strain 1448A / Race 6) (Pseudomonas syringae pv. phaseolicola (strain 1448A / Race 6)), this protein is Probable M18 family aminopeptidase 2.